The chain runs to 341 residues: MLKDGTSVSNEVIQWKCVEFRIESKRLHYGRFVISPFKKGQANTVGIAMRRALLGEVGGASITSARFEGVAHEYSTVAGIQETIHDILVNLKEIVLRSDSDGNQKAILSVTGPKRVTAGDISLPPSVKVIDDSQYIVTITQPISVNIELNIECDCGYRIESLNEYRDGEFPVDAVFMPVRNVNYSVHPFGSGKEMREILFIEVWTNGSLTPTEAISKASKSSIDLLSPFLHTKHEDIPDFESNRDSSSLMKFSSRVDDVDKSEGDFFKNTFIDQLELPARAFNCLKRAEIHTISDLLSYSRDDLLKLKSFGKKSVDQVSRALWERFATELPNEKPRVVGDE.

An alpha N-terminal domain (alpha-NTD) region spans residues 1-233; sequence MLKDGTSVSN…DLLSPFLHTK (233 aa). Positions 262–341 are alpha C-terminal domain (alpha-CTD); that stretch reads SEGDFFKNTF…NEKPRVVGDE (80 aa).

This sequence belongs to the RNA polymerase alpha chain family. In terms of assembly, in plastids the minimal PEP RNA polymerase catalytic core is composed of four subunits: alpha, beta, beta', and beta''. When a (nuclear-encoded) sigma factor is associated with the core the holoenzyme is formed, which can initiate transcription.

The protein resides in the plastid. The protein localises to the chloroplast. It catalyses the reaction RNA(n) + a ribonucleoside 5'-triphosphate = RNA(n+1) + diphosphate. Functionally, DNA-dependent RNA polymerase catalyzes the transcription of DNA into RNA using the four ribonucleoside triphosphates as substrates. The sequence is that of DNA-directed RNA polymerase subunit alpha from Marsilea quadrifolia (European water clover).